We begin with the raw amino-acid sequence, 337 residues long: Regulator of RpoS (337 aa).

The 115-residue stretch at 9 to 123 (QILIVEDEQV…NRLREMVFAC (115 aa)) folds into the Response regulatory domain. Position 58 is a 4-aspartylphosphate (D58).

Belongs to the RssB family. In terms of assembly, binds to RpoS. In terms of processing, phosphorylated. Phosphorylation stimulates the interaction with RpoS and, therefore, the proteolysis of RpoS.

Functionally, regulates the turnover of the sigma S factor (RpoS) by promoting its proteolysis in exponentially growing cells. Acts by binding and delivering RpoS to the ClpXP protease. RssB is not co-degraded with RpoS, but is released from the complex and can initiate a new cycle of RpoS recognition and degradation. In Shigella flexneri, this protein is Regulator of RpoS.